The sequence spans 137 residues: Ribosomal RNA large subunit methyltransferase H (137 aa).

Residues leucine 56, glycine 85, and 104–109 (LSPLTF) contribute to the S-adenosyl-L-methionine site.

Belongs to the RNA methyltransferase RlmH family. As to quaternary structure, homodimer.

The protein resides in the cytoplasm. It catalyses the reaction pseudouridine(1915) in 23S rRNA + S-adenosyl-L-methionine = N(3)-methylpseudouridine(1915) in 23S rRNA + S-adenosyl-L-homocysteine + H(+). Functionally, specifically methylates the pseudouridine at position 1915 (m3Psi1915) in 23S rRNA. The chain is Ribosomal RNA large subunit methyltransferase H from Prochlorococcus marinus subsp. pastoris (strain CCMP1986 / NIES-2087 / MED4).